The primary structure comprises 190 residues: MSKRILAAVVTVLSLTAFSPAFAATTSTHVLLTTSAGNIELALDDQKAPVSVKNFVDYVNSGFYNGTIFHRVIPGFMVQGGGFSSDMKQKATNPPVKNEADNGLRNLRGTISMARTSEKDSATSQFFINVADNAFLDHGQRDFGYAVFGKVVKGMEVADKISQVQTENVGPYQNVPSKPIVIQSAKIIKK.

The first 23 residues, 1 to 23 (MSKRILAAVVTVLSLTAFSPAFA), serve as a signal peptide directing secretion. Positions 26–187 (TSTHVLLTTS…KPIVIQSAKI (162 aa)) constitute a PPIase cyclophilin-type domain.

This sequence belongs to the cyclophilin-type PPIase family.

Its subcellular location is the periplasm. The enzyme catalyses [protein]-peptidylproline (omega=180) = [protein]-peptidylproline (omega=0). Functionally, PPIases accelerate the folding of proteins. It catalyzes the cis-trans isomerization of proline imidic peptide bonds in oligopeptides. In Dickeya dadantii (strain 3937) (Erwinia chrysanthemi (strain 3937)), this protein is Peptidyl-prolyl cis-trans isomerase A (rotA).